A 511-amino-acid polypeptide reads, in one-letter code: Ribonuclease Y (511 aa).

Residues 3–23 traverse the membrane as a helical segment; that stretch reads VGILIGIIILGVVGFIQYTLI. The region spanning 201–286 is the KH domain; sequence TVHVVALPND…EMVERAIKDV (86 aa). An HD domain is found at 327–420; the sequence is VLKHSIEVSY…VQAADAISAA (94 aa).

It belongs to the RNase Y family.

The protein resides in the cell membrane. Its function is as follows. Endoribonuclease that initiates mRNA decay. This Clostridium perfringens (strain SM101 / Type A) protein is Ribonuclease Y.